The following is a 226-amino-acid chain: Ribonuclease S-7 (226 aa).

The first 27 residues, 1–27 (MGITGMIYIVTMVFSLIVLILSSSTVG), serve as a signal peptide directing secretion. Position 36 (glutamine 36) interacts with RNA. Cysteine 42 and cysteine 49 are disulfide-bonded. Residue histidine 60 coordinates RNA. The active-site Proton donor is histidine 60. 2 N-linked (GlcNAc...) asparagine; alternate glycosylation sites follow: asparagine 74 and asparagine 77. The cysteines at positions 75 and 119 are disulfide-linked. Residues 98–99 (NV), phenylalanine 108, 111–112 (KQ), and 115–116 (KH) each bind RNA. Glutamine 112 is an active-site residue. Histidine 116 acts as the Proton acceptor in catalysis. N-linked (GlcNAc...) asparagine glycans are attached at residues asparagine 126, asparagine 144, and asparagine 172. Intrachain disulfides connect cysteine 183-cysteine 220 and cysteine 198-cysteine 209.

Belongs to the RNase T2 family. The N-glycans attached at Asn-74 and Asn-77 consist of either monosaccharide (GlcNAc) or disaccharide (GlcNAc-GlcNAc) that could not be distinguished. The N-glycan at Asn-144 contains mannose and xylose, and at Asn-126 contains mannose, xylose and fucose. The N-glycan at Asn-172 consists of disaccharide (GlcNAc-GlcNAc).

The catalysed reaction is a ribonucleotidyl-ribonucleotide-RNA + H2O = a 3'-end 3'-phospho-ribonucleotide-RNA + a 5'-end dephospho-ribonucleoside-RNA + H(+). In terms of biological role, self-incompatibility (SI) is the inherited ability of a flowering plant to prevent self-fertilization by discriminating between self and non-self pollen during pollination. In many species, self-incompatibility is controlled by the single, multiallelic locus S. In Pyrus pyrifolia (Chinese pear), this protein is Ribonuclease S-7.